Reading from the N-terminus, the 420-residue chain is Imidazolonepropionase (420 aa).

2 residues coordinate Fe(3+): His-77 and His-79. 2 residues coordinate Zn(2+): His-77 and His-79. 4-imidazolone-5-propanoate is bound by residues Arg-86, Tyr-149, and His-182. Tyr-149 lines the N-formimidoyl-L-glutamate pocket. Residue His-245 participates in Fe(3+) binding. Residue His-245 coordinates Zn(2+). Glu-248 is a 4-imidazolone-5-propanoate binding site. Asp-319 provides a ligand contact to Fe(3+). Residue Asp-319 coordinates Zn(2+). Position 321 (Asn-321) interacts with N-formimidoyl-L-glutamate.

It belongs to the metallo-dependent hydrolases superfamily. HutI family. Zn(2+) is required as a cofactor. The cofactor is Fe(3+).

It is found in the cytoplasm. It catalyses the reaction 4-imidazolone-5-propanoate + H2O = N-formimidoyl-L-glutamate. It participates in amino-acid degradation; L-histidine degradation into L-glutamate; N-formimidoyl-L-glutamate from L-histidine: step 3/3. Functionally, catalyzes the hydrolytic cleavage of the carbon-nitrogen bond in imidazolone-5-propanoate to yield N-formimidoyl-L-glutamate. It is the third step in the universal histidine degradation pathway. The sequence is that of Imidazolonepropionase from Haloarcula marismortui (strain ATCC 43049 / DSM 3752 / JCM 8966 / VKM B-1809) (Halobacterium marismortui).